Consider the following 227-residue polypeptide: YEATS domain-containing protein 4 (227 aa).

A YEATS domain is found at 15-158; sequence RVKGVTIVKP…AMMQQLLTTS (144 aa). Lysine 37 is covalently cross-linked (Glycyl lysine isopeptide (Lys-Gly) (interchain with G-Cter in SUMO2)). The diacetylated histone H3 binding stretch occupies residues 93-97; sequence WGEFE. The tract at residues 163 to 227 is interaction with MLLT10; sequence LGAYKHETEF…LEEDDQTKDI (65 aa). Residues 168–227 form an interaction with TACC1 region; that stretch reads HETEFAELEVKTREKLEAAKKKTSFEIAELKERLKASRETINCLKNEIRKLEEDDQTKDI. A coiled-coil region spans residues 178-226; sequence KTREKLEAAKKKTSFEIAELKERLKASRETINCLKNEIRKLEEDDQTKD.

Component of numerous complexes with chromatin remodeling and histone acetyltransferase activity. Component of the NuA4 histone acetyltransferase complex which contains the catalytic subunit KAT5/TIP60 and the subunits EP400, TRRAP/PAF400, BRD8/SMAP, EPC1, DMAP1/DNMAP1, RUVBL1/TIP49, RUVBL2, ING3, actin, ACTL6A/BAF53A, MORF4L1/MRG15, MORF4L2/MRGX, MRGBP, YEATS4/GAS41, VPS72/YL1 and MEAF6. The NuA4 complex interacts with MYC and the adenovirus E1A protein. Component of a NuA4-related complex which contains EP400, TRRAP/PAF400, SRCAP, BRD8/SMAP, EPC1, DMAP1/DNMAP1, RUVBL1/TIP49, RUVBL2, actin, ACTL6A/BAF53A, VPS72 and YEATS4/GAS41. Interacts with MLLT10/AF10. Also interacts with the SWI/SNF component SMARCB1/BAF47, TACC1 and TACC2, and the nuclear matrix protein NUMA1.

Its subcellular location is the nucleus. Functionally, chromatin reader component of the NuA4 histone acetyltransferase (HAT) complex, a complex involved in transcriptional activation of select genes principally by acetylation of nucleosomal histones H4 and H2A. Specifically recognizes and binds acylated histone H3, with a preference for histone H3 diacetylated at 'Lys-18' and 'Lys-27' (H3K18ac and H3K27ac) or histone H3 diacetylated at 'Lys-14' and 'Lys-27' (H3K14ac and H3K27ac). Also able to recognize and bind crotonylated histone H3. May also recognize and bind histone H3 succinylated at 'Lys-122' (H3K122succ); additional evidences are however required to confirm this result in vivo. Plays a key role in histone variant H2AZ1/H2A.Z deposition into specific chromatin regions: recognizes and binds H3K14ac and H3K27ac on the promoters of actively transcribed genes and recruits NuA4-related complex to deposit H2AZ1/H2A.Z. H2AZ1/H2A.Z deposition is required for maintenance of embryonic stem cell. The sequence is that of YEATS domain-containing protein 4 from Mus musculus (Mouse).